Reading from the N-terminus, the 158-residue chain is Regulator of sigma D (158 aa).

Belongs to the Rsd/AlgQ family. In terms of assembly, interacts with RpoD.

It localises to the cytoplasm. Binds RpoD and negatively regulates RpoD-mediated transcription activation by preventing the interaction between the primary sigma factor RpoD with the catalytic core of the RNA polymerase and with promoter DNA. May be involved in replacement of the RNA polymerase sigma subunit from RpoD to RpoS during the transition from exponential growth to the stationary phase. The sequence is that of Regulator of sigma D from Shigella dysenteriae serotype 1 (strain Sd197).